Reading from the N-terminus, the 350-residue chain is Heme A synthase (350 aa).

8 consecutive transmembrane segments (helical) span residues 16-36 (LARW…VGGI), 77-97 (FQLV…IFFW), 101-121 (HRLL…WFWI), 136-156 (LLAL…SGIV), 170-190 (LLVA…LVAL), 201-221 (GIGL…ALVA), 265-285 (VFLV…VLVV), and 299-321 (IVLH…SGVA). His-272 is a binding site for heme. His-328 is a binding site for heme.

Belongs to the COX15/CtaA family. Type 2 subfamily. In terms of assembly, interacts with CtaB. It depends on heme b as a cofactor.

It is found in the cell membrane. It carries out the reaction Fe(II)-heme o + 2 A + H2O = Fe(II)-heme a + 2 AH2. Its pathway is porphyrin-containing compound metabolism; heme A biosynthesis; heme A from heme O: step 1/1. In terms of biological role, catalyzes the conversion of heme O to heme A by two successive hydroxylations of the methyl group at C8. The first hydroxylation forms heme I, the second hydroxylation results in an unstable dihydroxymethyl group, which spontaneously dehydrates, resulting in the formyl group of heme A. The protein is Heme A synthase of Novosphingobium aromaticivorans (strain ATCC 700278 / DSM 12444 / CCUG 56034 / CIP 105152 / NBRC 16084 / F199).